A 369-amino-acid polypeptide reads, in one-letter code: RING-H2 finger protein ATL47 (369 aa).

The helical transmembrane segment at 52-72 (IILFIIVLLSVIFFICSILHL) threads the bilayer. Residues 144-186 (CAVCLCEFSEDDKLRLLPNCSHAFHIDCIDTWLLSNSTCPLCR) form an RING-type; atypical zinc finger. The disordered stretch occupies residues 332 to 355 (NNHPSETNLVVGGSSSSSSYVCSG). A compositionally biased stretch (low complexity) spans 341–355 (VVGGSSSSSSYVCSG).

This sequence belongs to the RING-type zinc finger family. ATL subfamily.

It localises to the membrane. The catalysed reaction is S-ubiquitinyl-[E2 ubiquitin-conjugating enzyme]-L-cysteine + [acceptor protein]-L-lysine = [E2 ubiquitin-conjugating enzyme]-L-cysteine + N(6)-ubiquitinyl-[acceptor protein]-L-lysine.. Its pathway is protein modification; protein ubiquitination. The polypeptide is RING-H2 finger protein ATL47 (ATL47) (Arabidopsis thaliana (Mouse-ear cress)).